The primary structure comprises 289 residues: Protease HtpX homolog (289 aa).

The next 2 helical transmembrane spans lie at 8–28 (LALLAALSGLLIAISYWVIGG) and 29–49 (SSGLIIGIGLAAVTNLLSWYQ). Position 132 (His-132) interacts with Zn(2+). Glu-133 is an active-site residue. His-136 is a Zn(2+) binding site. 2 consecutive transmembrane segments (helical) span residues 151 to 171 (VAGAISFLAQMVSYSLWFGGI) and 183 to 203 (LGVLLTVVLAPIAATIIQLAI). Residue Glu-208 coordinates Zn(2+).

Belongs to the peptidase M48B family. Requires Zn(2+) as cofactor.

The protein localises to the cell inner membrane. The polypeptide is Protease HtpX homolog (Trichormus variabilis (strain ATCC 29413 / PCC 7937) (Anabaena variabilis)).